A 305-amino-acid polypeptide reads, in one-letter code: Transmembrane protein 74 (305 aa).

Disordered stretches follow at residues 52–88 (ATEMEGSKLSSSPASPSSSLQNSTLQPDAFPPGLLHS) and 123–143 (RNRSSPSAKGHNHPGELGWEN). Over residues 58 to 78 (SKLSSSPASPSSSLQNSTLQP) the composition is skewed to low complexity. Helical transmembrane passes span 178–198 (FISAILFLVTGILLVIISYIV) and 232–252 (VIAGLCLLTLGGVILSCLLMM).

This sequence belongs to the TMEM74 family. In terms of tissue distribution, expressed in heart, lung, and placenta.

It localises to the lysosome membrane. The protein localises to the cytoplasmic vesicle. It is found in the autophagosome membrane. Functionally, plays an essential role in autophagy. TMEM74-induced autophagy may involve PI3K signal transduction. The polypeptide is Transmembrane protein 74 (TMEM74) (Homo sapiens (Human)).